Here is a 72-residue protein sequence, read N- to C-terminus: Small ribosomal subunit protein bS18 (72 aa).

It belongs to the bacterial ribosomal protein bS18 family. In terms of assembly, part of the 30S ribosomal subunit. Forms a tight heterodimer with protein bS6.

Functionally, binds as a heterodimer with protein bS6 to the central domain of the 16S rRNA, where it helps stabilize the platform of the 30S subunit. The chain is Small ribosomal subunit protein bS18 from Francisella tularensis subsp. novicida (strain U112).